The chain runs to 540 residues: Ecdysone 20-monooxygenase (540 aa).

Heme is bound at residue C488.

It belongs to the cytochrome P450 family. The cofactor is heme. In terms of tissue distribution, strong expression by embryonic stage 10 in epidermis, decreases significantly in older embryos. Third instar larvae show expression in the midgut copper cells, Malpighian tubules and fat body. In the adult ovaries, expression is seen in both nurse cells and centripetally migrating follicle cells.

Its subcellular location is the mitochondrion membrane. It catalyses the reaction ecdysone + AH2 + O2 = 20-hydroxyecdysone + A + H2O. Its pathway is steroid biosynthesis; ecdysteroid biosynthesis. Functionally, required for CNS development; midline glial cells. Involved in the metabolism of insect hormones; responsible for all ecdysone 20-monooxygenase activity during embryonic, larval and adult stages. May be involved in the breakdown of synthetic insecticides. This chain is Ecdysone 20-monooxygenase (shd), found in Drosophila melanogaster (Fruit fly).